Reading from the N-terminus, the 159-residue chain is Putative pre-16S rRNA nuclease (159 aa).

It belongs to the YqgF nuclease family.

The protein localises to the cytoplasm. Its function is as follows. Could be a nuclease involved in processing of the 5'-end of pre-16S rRNA. The chain is Putative pre-16S rRNA nuclease from Thermobifida fusca (strain YX).